Here is a 393-residue protein sequence, read N- to C-terminus: NAD(P)H-quinone oxidoreductase subunit H, chloroplastic (393 aa).

The protein belongs to the complex I 49 kDa subunit family. NDH is composed of at least 16 different subunits, 5 of which are encoded in the nucleus.

It is found in the plastid. The protein resides in the chloroplast thylakoid membrane. It catalyses the reaction a plastoquinone + NADH + (n+1) H(+)(in) = a plastoquinol + NAD(+) + n H(+)(out). The catalysed reaction is a plastoquinone + NADPH + (n+1) H(+)(in) = a plastoquinol + NADP(+) + n H(+)(out). Functionally, NDH shuttles electrons from NAD(P)H:plastoquinone, via FMN and iron-sulfur (Fe-S) centers, to quinones in the photosynthetic chain and possibly in a chloroplast respiratory chain. The immediate electron acceptor for the enzyme in this species is believed to be plastoquinone. Couples the redox reaction to proton translocation, and thus conserves the redox energy in a proton gradient. The sequence is that of NAD(P)H-quinone oxidoreductase subunit H, chloroplastic from Nasturtium officinale (Watercress).